The sequence spans 634 residues: Chaperone protein HtpG (634 aa).

The interval 1 to 339 (MAQETMSFQA…SADLPLNVSR (339 aa)) is a; substrate-binding. The tract at residues 340 to 559 (EILQESRDVK…DGEMSGYLQR (220 aa)) is b. The segment at 560-634 (MLKAAGQQAP…ALLLARANEA (75 aa)) is c.

The protein belongs to the heat shock protein 90 family. As to quaternary structure, homodimer.

The protein localises to the cytoplasm. Functionally, molecular chaperone. Has ATPase activity. This is Chaperone protein HtpG from Paraburkholderia xenovorans (strain LB400).